The primary structure comprises 383 residues: Forkhead box protein I3-B (383 aa).

Polar residues predominate over residues 1 to 12 (MTSYESQGQSPT). Disordered stretches follow at residues 1–55 (MTSY…YELG), 215–277 (DNGN…PCLS), and 317–348 (TTGFSTFTPSTTVSDWASPLPPPPPMSSSPSH). A compositionally biased stretch (low complexity) spans 25–35 (PPELSLYSDSY). The segment at residues 130–224 (RPPYSYSALI…DNGNFRRKRK (95 aa)) is a DNA-binding region (fork-head). The Nuclear localization signal signature appears at 220-226 (RRKRKRK). The span at 234 to 249 (SSSGGNESGDSNGRGS) shows a compositional bias: low complexity. Residues 250-277 (PKSQSIDISTSPEKGPSPASTGPSPCLS) show a composition bias toward polar residues. Residues 317-330 (TTGFSTFTPSTTVS) are compositionally biased toward low complexity.

Expressed in ionocyte precursors.

Its subcellular location is the nucleus. Its function is as follows. Transcription factor required for epithelial cell differentiation. Involved in specification of skin ionocytes from epidermal precursors. The sequence is that of Forkhead box protein I3-B from Danio rerio (Zebrafish).